The chain runs to 566 residues: Arginine--tRNA ligase (566 aa).

The short motif at 123–133 (PNIAKPFHIGH) is the 'HIGH' region element.

It belongs to the class-I aminoacyl-tRNA synthetase family. In terms of assembly, monomer.

The protein localises to the cytoplasm. It carries out the reaction tRNA(Arg) + L-arginine + ATP = L-arginyl-tRNA(Arg) + AMP + diphosphate. The chain is Arginine--tRNA ligase from Clostridioides difficile (strain 630) (Peptoclostridium difficile).